A 338-amino-acid polypeptide reads, in one-letter code: Phenylalanine--tRNA ligase alpha subunit (338 aa).

A Mg(2+)-binding site is contributed by glutamate 253.

The protein belongs to the class-II aminoacyl-tRNA synthetase family. Phe-tRNA synthetase alpha subunit type 1 subfamily. In terms of assembly, tetramer of two alpha and two beta subunits. Requires Mg(2+) as cofactor.

It is found in the cytoplasm. The enzyme catalyses tRNA(Phe) + L-phenylalanine + ATP = L-phenylalanyl-tRNA(Phe) + AMP + diphosphate + H(+). The chain is Phenylalanine--tRNA ligase alpha subunit from Trichlorobacter lovleyi (strain ATCC BAA-1151 / DSM 17278 / SZ) (Geobacter lovleyi).